The primary structure comprises 135 residues: Large ribosomal subunit protein mL54 (135 aa).

A mitochondrion-targeting transit peptide spans 1-14 (MAAAHLLRASRVWA).

Belongs to the mitochondrion-specific ribosomal protein mL54 family. As to quaternary structure, component of the mitochondrial ribosome large subunit (39S) which comprises a 16S rRNA and about 50 distinct proteins.

It is found in the mitochondrion. The sequence is that of Large ribosomal subunit protein mL54 (Mrpl54) from Mus musculus (Mouse).